A 149-amino-acid chain; its full sequence is Large ribosomal subunit protein bL9 (149 aa).

Belongs to the bacterial ribosomal protein bL9 family.

Its function is as follows. Binds to the 23S rRNA. The chain is Large ribosomal subunit protein bL9 from Helicobacter pylori (strain J99 / ATCC 700824) (Campylobacter pylori J99).